A 944-amino-acid chain; its full sequence is Valine--tRNA ligase (944 aa).

The short motif at 43–53 is the 'HIGH' region element; it reads PNVTGTLHMGH. The 'KMSKS' region motif lies at 550–554; sequence KMSKS. Lysine 553 contacts ATP. Positions 878 to 944 form a coiled coil; it reads LVDMDAERTR…TGLREQRAKL (67 aa).

The protein belongs to the class-I aminoacyl-tRNA synthetase family. ValS type 1 subfamily. As to quaternary structure, monomer.

It localises to the cytoplasm. The enzyme catalyses tRNA(Val) + L-valine + ATP = L-valyl-tRNA(Val) + AMP + diphosphate. Catalyzes the attachment of valine to tRNA(Val). As ValRS can inadvertently accommodate and process structurally similar amino acids such as threonine, to avoid such errors, it has a 'posttransfer' editing activity that hydrolyzes mischarged Thr-tRNA(Val) in a tRNA-dependent manner. This chain is Valine--tRNA ligase, found in Xanthomonas campestris pv. campestris (strain B100).